The following is a 327-amino-acid chain: Thioredoxin reductase sirT (327 aa).

FAD is bound by residues 15–18 (AGPA), 37–42 (DTGVFR), H50, and A115. An intrachain disulfide couples C139 to C142. FAD-binding positions include D289 and 296-297 (QV).

Belongs to the class-II pyridine nucleotide-disulfide oxidoreductase family. Homodimer. FAD is required as a cofactor.

Its pathway is mycotoxin biosynthesis. Its function is as follows. Thioredoxin reductase; part of the gene cluster that mediates the biosynthesis of sirodesmin PL, an epipolythiodioxopiperazine (ETP) characterized by a disulfide bridged cyclic dipeptide and that acts as a phytotoxin which is involved in the blackleg didease of canola. SirD catalyzes the O-prenylation of L-tyrosine (L-Tyr) in the presence of dimethylallyl diphosphate (DMAPP) to yield 4-O-dimethylallyl-L-Tyr, and therefore represents probably the first pathway-specific enzyme in the biosynthesis of sirodesmin PL. 4-O-dimethylallyl-L-Tyr, then undergoes condensation with L-Ser in a reaction catalyzed by the non-ribosomal peptide synthase sirP to form the diketopiperazine (DKP) backbone. Further bishydroxylation of the DKP performed by the cytochrome P450 monooxygenase sirC leads to the production of the intermediate phomamide. This step is essential to form the reactive thiol group required for toxicity of sirodesmin PL. The next steps of sirodesmin biosynthesis are not well understood yet, but some predictions could be made from intermediate compounds identification. Phomamide is converted into phomalizarine via oxidation, probably by sirT. Further oxidation, methylation (by sirM or sirN) and reduction steps convert phomalizarine to deacetyl sirodesmin. Finally, acetyltransferase sirH probably acetylates deacetyl sirodesmin to produce sirodesmin PL. The protein is Thioredoxin reductase sirT of Leptosphaeria maculans (Blackleg fungus).